The sequence spans 107 residues: Ferredoxin CarAc (107 aa).

Residues 6–102 enclose the Rieske domain; that stretch reads LKVCAASDMQ…VEVKEGEVYV (97 aa). [2Fe-2S] cluster-binding residues include Cys46, His48, Cys65, and His68.

As to quaternary structure, monomer. Carbazole 1,9a-dioxygenase complex consists of a terminal oxygenase component CarAa, a ferredoxin reductase component CarAd and a ferredoxin component CarAc. The cofactor is [2Fe-2S] cluster.

Part of the multicomponent carbazole 1,9a-dioxygenase (CARDO), that converts carbazole (CAR) into 2-aminobiphenyl-2,3-diol. Acts as a mediator in the electron transfer from CarAd to CarAa. The polypeptide is Ferredoxin CarAc (carAc) (Metapseudomonas resinovorans (Pseudomonas resinovorans)).